We begin with the raw amino-acid sequence, 197 residues long: Xanthine phosphoribosyltransferase (197 aa).

Xanthine is bound by residues L20 and N27. 128–132 (ANGQA) is a binding site for 5-phospho-alpha-D-ribose 1-diphosphate. K156 is a xanthine binding site.

This sequence belongs to the purine/pyrimidine phosphoribosyltransferase family. Xpt subfamily. Homodimer.

It localises to the cytoplasm. The enzyme catalyses XMP + diphosphate = xanthine + 5-phospho-alpha-D-ribose 1-diphosphate. It functions in the pathway purine metabolism; XMP biosynthesis via salvage pathway; XMP from xanthine: step 1/1. In terms of biological role, converts the preformed base xanthine, a product of nucleic acid breakdown, to xanthosine 5'-monophosphate (XMP), so it can be reused for RNA or DNA synthesis. In Bacillus cereus (strain B4264), this protein is Xanthine phosphoribosyltransferase.